Reading from the N-terminus, the 248-residue chain is Ubiquinone/menaquinone biosynthesis C-methyltransferase UbiE (248 aa).

2 residues coordinate S-adenosyl-L-methionine: Ser68 and Asp92.

The protein belongs to the class I-like SAM-binding methyltransferase superfamily. MenG/UbiE family.

It catalyses the reaction a 2-demethylmenaquinol + S-adenosyl-L-methionine = a menaquinol + S-adenosyl-L-homocysteine + H(+). It carries out the reaction a 2-methoxy-6-(all-trans-polyprenyl)benzene-1,4-diol + S-adenosyl-L-methionine = a 5-methoxy-2-methyl-3-(all-trans-polyprenyl)benzene-1,4-diol + S-adenosyl-L-homocysteine + H(+). The protein operates within quinol/quinone metabolism; menaquinone biosynthesis; menaquinol from 1,4-dihydroxy-2-naphthoate: step 2/2. It functions in the pathway cofactor biosynthesis; ubiquinone biosynthesis. Functionally, methyltransferase required for the conversion of demethylmenaquinol (DMKH2) to menaquinol (MKH2) and the conversion of 2-polyprenyl-6-methoxy-1,4-benzoquinol (DDMQH2) to 2-polyprenyl-3-methyl-6-methoxy-1,4-benzoquinol (DMQH2). The protein is Ubiquinone/menaquinone biosynthesis C-methyltransferase UbiE of Rickettsia felis (strain ATCC VR-1525 / URRWXCal2) (Rickettsia azadi).